The chain runs to 297 residues: MATLLSVRRARWRDYLELTKPKVVVLMLITSLAGMFLATRAGVSWSVLLFGNLGIGLCAGGAAVVNHVVDRRIDALMARTHKRPLAQGRVEPLPALLFALALALLGMVLLLVFTNALTAWLTLASLLGYAVLYTGFLKRATPQNIVIGGLAGAAPPLLGWVAVSGHVSAEPLLLVLIIFAWTPPHFWALAIHRKEEYAKADIPMLPVTHGERYTKLHILLYTLILLAVSLLPYAIHMSGPLYLVCALALGLRFLQWAWVLYRSSRPHAAIGTFKYSIGYLFALFIALLLDHYLLLNL.

9 helical membrane passes run 23-43 (VVVLMLITSLAGMFLATRAGV), 45-65 (WSVLLFGNLGIGLCAGGAAVV), 93-113 (LPALLFALALALLGMVLLLVF), 117-137 (LTAWLTLASLLGYAVLYTGFL), 145-165 (IVIGGLAGAAPPLLGWVAVSG), 171-191 (PLLLVLIIFAWTPPHFWALAI), 216-236 (LHILLYTLILLAVSLLPYAIH), 241-261 (LYLVCALALGLRFLQWAWVLY), and 277-297 (IGYLFALFIALLLDHYLLLNL).

Belongs to the UbiA prenyltransferase family. Protoheme IX farnesyltransferase subfamily.

Its subcellular location is the cell inner membrane. It catalyses the reaction heme b + (2E,6E)-farnesyl diphosphate + H2O = Fe(II)-heme o + diphosphate. It functions in the pathway porphyrin-containing compound metabolism; heme O biosynthesis; heme O from protoheme: step 1/1. Its function is as follows. Converts heme B (protoheme IX) to heme O by substitution of the vinyl group on carbon 2 of heme B porphyrin ring with a hydroxyethyl farnesyl side group. The polypeptide is Protoheme IX farnesyltransferase 1 (Pseudomonas putida (strain ATCC 47054 / DSM 6125 / CFBP 8728 / NCIMB 11950 / KT2440)).